The primary structure comprises 478 residues: Ninja-family protein 8 (478 aa).

3 disordered regions span residues 1–247 (MDDD…LTPG), 337–374 (FTAK…EKKA), and 454–478 (DAPA…SAEN). The segment covering 23–35 (KARDAPLEPKAEP) has biased composition (basic and acidic residues). Positions 169–179 (ISISTDDGSTG) are enriched in polar residues. A compositionally biased stretch (acidic residues) spans 180–189 (ENEDVAESEA). Residues 233–242 (SFSGSESSSG) are compositionally biased toward low complexity. Residues 339–358 (AKDKADQTGTKQVDDGKKPQ) are compositionally biased toward basic and acidic residues.

Belongs to the Ninja family.

It localises to the nucleus. The polypeptide is Ninja-family protein 8 (Zea mays (Maize)).